Consider the following 387-residue polypeptide: Phosphoglycerate kinase (387 aa).

Substrate is bound by residues 21–23, Arg-36, 59–62, Arg-113, and Arg-146; these read DLN and HLGR. ATP is bound by residues Lys-197, Glu-314, and 340–343; that span reads GGDT.

It belongs to the phosphoglycerate kinase family. As to quaternary structure, monomer.

Its subcellular location is the cytoplasm. It carries out the reaction (2R)-3-phosphoglycerate + ATP = (2R)-3-phospho-glyceroyl phosphate + ADP. It participates in carbohydrate degradation; glycolysis; pyruvate from D-glyceraldehyde 3-phosphate: step 2/5. The polypeptide is Phosphoglycerate kinase (pgk) (Pasteurella multocida (strain Pm70)).